A 463-amino-acid polypeptide reads, in one-letter code: Cytochrome c-552 (463 aa).

A signal peptide spans 1 to 23 (MNVKSIALSAVIATSFLAAGAMA). Histidine 83 is a binding site for heme c. Residues cysteine 111, cysteine 114, and lysine 115 each contribute to the heme site. The heme c site is built by cysteine 149, cysteine 152, histidine 153, cysteine 191, cysteine 194, and histidine 195. 4 residues coordinate Ca(2+): glutamate 197, tyrosine 198, lysine 246, and glutamine 248. Tyrosine 198 provides a ligand contact to substrate. Histidine 249 is a binding site for substrate. Residues histidine 260, cysteine 267, cysteine 270, histidine 271, histidine 286, cysteine 299, cysteine 302, histidine 303, and histidine 378 each contribute to the heme c site.

It belongs to the cytochrome c-552 family. Ca(2+) serves as cofactor. It depends on heme c as a cofactor.

The protein localises to the periplasm. It carries out the reaction 6 Fe(III)-[cytochrome c] + NH4(+) + 2 H2O = 6 Fe(II)-[cytochrome c] + nitrite + 8 H(+). It functions in the pathway nitrogen metabolism; nitrate reduction (assimilation). Its function is as follows. Catalyzes the reduction of nitrite to ammonia, consuming six electrons in the process. The chain is Cytochrome c-552 from Shewanella frigidimarina (strain NCIMB 400).